Reading from the N-terminus, the 402-residue chain is Multidrug resistance protein MdtH (402 aa).

11 helical membrane passes run tyrosine 13–isoleucine 33, serine 34–leucine 54, proline 99–phenylalanine 116, leucine 139–leucine 159, leucine 165–leucine 185, valine 214–methionine 234, alanine 243–isoleucine 263, leucine 277–leucine 297, leucine 300–threonine 320, leucine 340–glycine 360, and leucine 368–phenylalanine 388.

This sequence belongs to the major facilitator superfamily. DHA1 family. MdtH (TC 2.A.1.2.21) subfamily.

Its subcellular location is the cell inner membrane. The polypeptide is Multidrug resistance protein MdtH (Klebsiella pneumoniae (strain 342)).